The following is a 385-amino-acid chain: Transcription termination factor 2, mitochondrial (385 aa).

The N-terminal 35 residues, 1 to 35, are a transit peptide targeting the mitochondrion; the sequence is MSWRLLTGYQLCRLRLFRKPQPALKIRPSSVCVTY.

This sequence belongs to the mTERF family. Monomer.

It is found in the mitochondrion matrix. The protein resides in the mitochondrion nucleoid. Its function is as follows. Binds mitochondrial DNA and plays a role in the regulation of transcription of mitochondrial mRNA and rRNA species. In Rattus norvegicus (Rat), this protein is Transcription termination factor 2, mitochondrial (Mterf2).